The following is a 160-amino-acid chain: AP-1 complex subunit sigma-2 (160 aa).

It belongs to the adaptor complexes small subunit family. As to quaternary structure, adaptor protein complex 1 (AP-1) is a heterotetramer composed of two large adaptins (gamma-type subunit AP1G1 and beta-type subunit AP1B1), a medium adaptin (mu-type subunit AP1M1 or AP1M2) and a small adaptin (sigma-type subunit AP1S1 or AP1S2 or AP1S3). Binds to MUC1. In terms of tissue distribution, widely expressed.

Its subcellular location is the golgi apparatus. It localises to the cytoplasmic vesicle membrane. The protein localises to the membrane. It is found in the clathrin-coated pit. In terms of biological role, subunit of clathrin-associated adaptor protein complex 1 that plays a role in protein sorting in the late-Golgi/trans-Golgi network (TGN) and/or endosomes. The AP complexes mediate both the recruitment of clathrin to membranes and the recognition of sorting signals within the cytosolic tails of transmembrane cargo molecules. The sequence is that of AP-1 complex subunit sigma-2 (Ap1s2) from Mus musculus (Mouse).